The chain runs to 951 residues: Exportin-2 (951 aa).

One can recognise an Importin N-terminal domain in the interval 29–104 (ATSKIQKFVK…KSLLLNFILS (76 aa)).

This sequence belongs to the XPO2/CSE1 family.

It is found in the cytoplasm. The protein localises to the nucleus. Its function is as follows. Export receptor for importin alpha. Mediates importin-alpha re-export from the nucleus to the cytoplasm after import substrates have been released into the nucleoplasm. The polypeptide is Exportin-2 (xpo2) (Dictyostelium discoideum (Social amoeba)).